Consider the following 108-residue polypeptide: Nucleoid-associated protein Pmen_2646 (108 aa).

Residues M1–E25 form a disordered region.

The protein belongs to the YbaB/EbfC family. In terms of assembly, homodimer.

The protein localises to the cytoplasm. Its subcellular location is the nucleoid. Functionally, binds to DNA and alters its conformation. May be involved in regulation of gene expression, nucleoid organization and DNA protection. In Ectopseudomonas mendocina (strain ymp) (Pseudomonas mendocina), this protein is Nucleoid-associated protein Pmen_2646.